We begin with the raw amino-acid sequence, 129 residues long: UPF0102 protein CPS_4433 (129 aa).

This sequence belongs to the UPF0102 family.

The chain is UPF0102 protein CPS_4433 from Colwellia psychrerythraea (strain 34H / ATCC BAA-681) (Vibrio psychroerythus).